Here is a 102-residue protein sequence, read N- to C-terminus: Small ribosomal subunit protein uS14 (102 aa).

This sequence belongs to the universal ribosomal protein uS14 family. Part of the 30S ribosomal subunit. Contacts proteins S3 and S10.

Functionally, binds 16S rRNA, required for the assembly of 30S particles and may also be responsible for determining the conformation of the 16S rRNA at the A site. This is Small ribosomal subunit protein uS14 from Wolbachia sp. subsp. Brugia malayi (strain TRS).